We begin with the raw amino-acid sequence, 503 residues long: MTAVDAPDILDYDEVLTKYEPVMGMEVHVELGTATKMFCPCPTEFGAEPNTQVCPVCLGMPGSLPVVNAAAVESAIRIGLALNCSITPWGRFARKNYFYPDQPKNYQISQYDEPIATEGYLDVILDDGTTWRVDIERAHMEEDTGKSLHVGGATGRIHGASHSLLDYNRAGVPLVEIVTKTIHGAGERAPEVARAYVTALRDLLKSLDVSDVRMDQGSMRCDANISLMPIGAKELGTRTETKNVNSLKSVEVAVRYEMRRQAAVLDAGGEVIQETRHFQEADGTTAAGRRKETAEDYRYFPEPDLEPVAPSAEWVEELRGTLPELPWIRRARIQKDWGISDEVMRDLVNAGAIDLVIATTEAGASPEAARSWWLSYLSQQANTRGVELGALPITPAQVAQVVALIDSGKLNNKVARQVVDHVLDGEGDPEQVVAAHPELVVERDETKLKAAVDEALAANPDIADKIRSGKVQAAGKIVGDVMKATRGQADAARVKELVIEACS.

Belongs to the GatB/GatE family. GatB subfamily. Heterotrimer of A, B and C subunits.

The catalysed reaction is L-glutamyl-tRNA(Gln) + L-glutamine + ATP + H2O = L-glutaminyl-tRNA(Gln) + L-glutamate + ADP + phosphate + H(+). It carries out the reaction L-aspartyl-tRNA(Asn) + L-glutamine + ATP + H2O = L-asparaginyl-tRNA(Asn) + L-glutamate + ADP + phosphate + 2 H(+). In terms of biological role, allows the formation of correctly charged Asn-tRNA(Asn) or Gln-tRNA(Gln) through the transamidation of misacylated Asp-tRNA(Asn) or Glu-tRNA(Gln) in organisms which lack either or both of asparaginyl-tRNA or glutaminyl-tRNA synthetases. The reaction takes place in the presence of glutamine and ATP through an activated phospho-Asp-tRNA(Asn) or phospho-Glu-tRNA(Gln). The protein is Aspartyl/glutamyl-tRNA(Asn/Gln) amidotransferase subunit B of Rhodococcus erythropolis (strain PR4 / NBRC 100887).